Here is a 24-residue protein sequence, read N- to C-terminus: M-ectatotoxin-Eb2b (24 aa).

Expressed by the venom gland.

It localises to the secreted. Antimicrobial peptide active against Gram-negative bacterium E.coli MH1 (MIC=2.5 uM) and P.aeruginosa PAO1 (MIC=10 uM) and against Gram-positive bacterium A.globiformis VKM Ac-1112 (MIC=0.6 uM). The sequence is that of M-ectatotoxin-Eb2b from Ectatomma brunneum (Ant).